We begin with the raw amino-acid sequence, 90 residues long: U7-theraphotoxin-Hhn1c (90 aa).

The N-terminal stretch at 1-19 (MKTAIFTVVLALAVFAVLS) is a signal peptide. A propeptide spanning residues 20–50 (FGWEANEKALSEEFTELIHEKEAASETEARE) is cleaved from the precursor. 3 cysteine pairs are disulfide-bonded: C51–C65, C58–C70, and C64–C81.

Belongs to the neurotoxin 10 (Hwtx-1) family. 13 (Hntx-13) subfamily. In terms of tissue distribution, expressed by the venom gland.

Its subcellular location is the secreted. In terms of biological role, ion channel inhibitor. This chain is U7-theraphotoxin-Hhn1c, found in Cyriopagopus hainanus (Chinese bird spider).